The sequence spans 372 residues: GDP-mannose transporter GONST3 (372 aa).

10 helical membrane passes run 33–53 (ASVY…SIIN), 60–80 (FPYP…GVLL), 92–112 (LNLL…LSLF), 125–145 (TFIV…TLFL), 155–175 (WGSL…DYQF), 177–197 (IAAY…FVYI), 209–229 (WGLV…ELLI), 251–271 (VVLP…FGFS), 280–300 (GFTV…LMVW), and 303–323 (HSTF…VMYQ). The interval 331–372 (NATQEAKPQEQDEEQEKLLEMQENKESNSVDIKETLKSEEKL) is disordered. The span at 346 to 372 (EKLLEMQENKESNSVDIKETLKSEEKL) shows a compositional bias: basic and acidic residues.

The protein belongs to the nucleotide-sugar transporter family. GDP-Mannose:GMP antiporter (GMA) (TC 2.A.7.13) subfamily. In terms of tissue distribution, expressed in rosette leaves, stems, flowers and siliques.

It is found in the golgi apparatus membrane. In terms of biological role, GDP-mannose transporter that may be involved in the import of GDP-mannose from the cytoplasm into the Golgi lumen. This Arabidopsis thaliana (Mouse-ear cress) protein is GDP-mannose transporter GONST3.